The sequence spans 59 residues: Large ribosomal subunit protein uL30 (59 aa).

It belongs to the universal ribosomal protein uL30 family. Part of the 50S ribosomal subunit.

The protein is Large ribosomal subunit protein uL30 of Desulfatibacillum aliphaticivorans.